The following is a 338-amino-acid chain: Tagatose 1,6-diphosphate aldolase (338 aa).

Belongs to the aldolase LacD family.

The catalysed reaction is D-tagatofuranose 1,6-bisphosphate = D-glyceraldehyde 3-phosphate + dihydroxyacetone phosphate. It participates in carbohydrate metabolism; D-tagatose 6-phosphate degradation; D-glyceraldehyde 3-phosphate and glycerone phosphate from D-tagatose 6-phosphate: step 2/2. This is Tagatose 1,6-diphosphate aldolase from Listeria monocytogenes serovar 1/2a (strain ATCC BAA-679 / EGD-e).